Consider the following 477-residue polypeptide: Bifunctional protein HldE (477 aa).

Residues 1-318 (MKVTLPEFER…ENAVRGRADT (318 aa)) are ribokinase. Position 179 is an N6-acetyllysine (Lys179). Residue 195–198 (NLSE) participates in ATP binding. Asp264 is an active-site residue. The interval 344–477 (MTNGVFDILH…IKKIQLDKKG (134 aa)) is cytidylyltransferase.

This sequence in the N-terminal section; belongs to the carbohydrate kinase PfkB family. In the C-terminal section; belongs to the cytidylyltransferase family. In terms of assembly, homodimer.

The enzyme catalyses D-glycero-beta-D-manno-heptose 7-phosphate + ATP = D-glycero-beta-D-manno-heptose 1,7-bisphosphate + ADP + H(+). It catalyses the reaction D-glycero-beta-D-manno-heptose 1-phosphate + ATP + H(+) = ADP-D-glycero-beta-D-manno-heptose + diphosphate. Its pathway is nucleotide-sugar biosynthesis; ADP-L-glycero-beta-D-manno-heptose biosynthesis; ADP-L-glycero-beta-D-manno-heptose from D-glycero-beta-D-manno-heptose 7-phosphate: step 1/4. It participates in nucleotide-sugar biosynthesis; ADP-L-glycero-beta-D-manno-heptose biosynthesis; ADP-L-glycero-beta-D-manno-heptose from D-glycero-beta-D-manno-heptose 7-phosphate: step 3/4. Catalyzes the phosphorylation of D-glycero-D-manno-heptose 7-phosphate at the C-1 position to selectively form D-glycero-beta-D-manno-heptose-1,7-bisphosphate. Functionally, catalyzes the ADP transfer from ATP to D-glycero-beta-D-manno-heptose 1-phosphate, yielding ADP-D-glycero-beta-D-manno-heptose. This is Bifunctional protein HldE from Escherichia coli O81 (strain ED1a).